The chain runs to 267 residues: Indole-3-glycerol phosphate synthase (267 aa).

It belongs to the TrpC family.

It carries out the reaction 1-(2-carboxyphenylamino)-1-deoxy-D-ribulose 5-phosphate + H(+) = (1S,2R)-1-C-(indol-3-yl)glycerol 3-phosphate + CO2 + H2O. It participates in amino-acid biosynthesis; L-tryptophan biosynthesis; L-tryptophan from chorismate: step 4/5. This chain is Indole-3-glycerol phosphate synthase, found in Verminephrobacter eiseniae (strain EF01-2).